The following is a 79-amino-acid chain: Small ribosomal subunit protein bS16 (79 aa).

Belongs to the bacterial ribosomal protein bS16 family.

This chain is Small ribosomal subunit protein bS16, found in Hahella chejuensis (strain KCTC 2396).